The sequence spans 334 residues: Ketol-acid reductoisomerase (NADP(+)) (334 aa).

The KARI N-terminal Rossmann domain occupies 3 to 183 (ATIYYENDAD…GGTRGGVIET (181 aa)). NADP(+)-binding positions include 26–29 (YGSQ), Arg-49, Ser-52, and 84–87 (DEVQ). The active site involves His-109. Gly-135 is a binding site for NADP(+). The region spanning 184–329 (TFAEETETDL…LGLRRMMNWI (146 aa)) is the KARI C-terminal knotted domain. Asp-192, Glu-196, Glu-228, and Glu-232 together coordinate Mg(2+). Ser-253 is a binding site for substrate.

It belongs to the ketol-acid reductoisomerase family. Requires Mg(2+) as cofactor.

It carries out the reaction (2R)-2,3-dihydroxy-3-methylbutanoate + NADP(+) = (2S)-2-acetolactate + NADPH + H(+). The catalysed reaction is (2R,3R)-2,3-dihydroxy-3-methylpentanoate + NADP(+) = (S)-2-ethyl-2-hydroxy-3-oxobutanoate + NADPH + H(+). It functions in the pathway amino-acid biosynthesis; L-isoleucine biosynthesis; L-isoleucine from 2-oxobutanoate: step 2/4. The protein operates within amino-acid biosynthesis; L-valine biosynthesis; L-valine from pyruvate: step 2/4. Its function is as follows. Involved in the biosynthesis of branched-chain amino acids (BCAA). Catalyzes an alkyl-migration followed by a ketol-acid reduction of (S)-2-acetolactate (S2AL) to yield (R)-2,3-dihydroxy-isovalerate. In the isomerase reaction, S2AL is rearranged via a Mg-dependent methyl migration to produce 3-hydroxy-3-methyl-2-ketobutyrate (HMKB). In the reductase reaction, this 2-ketoacid undergoes a metal-dependent reduction by NADPH to yield (R)-2,3-dihydroxy-isovalerate. The protein is Ketol-acid reductoisomerase (NADP(+)) of Rhodopirellula baltica (strain DSM 10527 / NCIMB 13988 / SH1).